The chain runs to 210 residues: Protein GrpE (210 aa).

It belongs to the GrpE family. As to quaternary structure, homodimer.

Its subcellular location is the cytoplasm. In terms of biological role, participates actively in the response to hyperosmotic and heat shock by preventing the aggregation of stress-denatured proteins, in association with DnaK and GrpE. It is the nucleotide exchange factor for DnaK and may function as a thermosensor. Unfolded proteins bind initially to DnaJ; upon interaction with the DnaJ-bound protein, DnaK hydrolyzes its bound ATP, resulting in the formation of a stable complex. GrpE releases ADP from DnaK; ATP binding to DnaK triggers the release of the substrate protein, thus completing the reaction cycle. Several rounds of ATP-dependent interactions between DnaJ, DnaK and GrpE are required for fully efficient folding. This chain is Protein GrpE, found in Rhizobium leguminosarum bv. trifolii (strain WSM2304).